A 195-amino-acid polypeptide reads, in one-letter code: Holliday junction branch migration complex subunit RuvA (195 aa).

A domain I region spans residues 1–63 (MIASVRGEVI…EDSMTLYGFV (63 aa)). The domain II stretch occupies residues 64 to 142 (DGDARDLFLT…PVSAGGGAAV (79 aa)). Residues 143 to 150 (GGHAIRGP) form a flexible linker region. Positions 150–195 (PVVEALVGLGFAAKQAEEATDKVLANDPEATTSSALRAALSMLGKK) are domain III.

This sequence belongs to the RuvA family. In terms of assembly, homotetramer. Forms an RuvA(8)-RuvB(12)-Holliday junction (HJ) complex. HJ DNA is sandwiched between 2 RuvA tetramers; dsDNA enters through RuvA and exits via RuvB. An RuvB hexamer assembles on each DNA strand where it exits the tetramer. Each RuvB hexamer is contacted by two RuvA subunits (via domain III) on 2 adjacent RuvB subunits; this complex drives branch migration. In the full resolvosome a probable DNA-RuvA(4)-RuvB(12)-RuvC(2) complex forms which resolves the HJ.

Its subcellular location is the cytoplasm. Functionally, the RuvA-RuvB-RuvC complex processes Holliday junction (HJ) DNA during genetic recombination and DNA repair, while the RuvA-RuvB complex plays an important role in the rescue of blocked DNA replication forks via replication fork reversal (RFR). RuvA specifically binds to HJ cruciform DNA, conferring on it an open structure. The RuvB hexamer acts as an ATP-dependent pump, pulling dsDNA into and through the RuvAB complex. HJ branch migration allows RuvC to scan DNA until it finds its consensus sequence, where it cleaves and resolves the cruciform DNA. The sequence is that of Holliday junction branch migration complex subunit RuvA from Mycolicibacterium smegmatis (strain ATCC 700084 / mc(2)155) (Mycobacterium smegmatis).